The following is a 539-amino-acid chain: Cytochrome P450 monooxygenase pvhE (539 aa).

Residues 15–31 form a helical membrane-spanning segment; the sequence is VAFCSLVILCILFKVLT. An N-linked (GlcNAc...) asparagine glycan is attached at asparagine 379. Cysteine 473 contacts heme.

This sequence belongs to the cytochrome P450 family. It depends on heme as a cofactor.

The protein resides in the membrane. It functions in the pathway secondary metabolite biosynthesis. Functionally, cytochrome P450 monooxygenase; part of the gene cluster that mediates the biosynthesis of varicidin A, an antifungal natural product containing a cis-octahydrodecalin core. The PKS module of pvhA together with the enoylreductase pvhC catalyze the formation of the polyketide unit which is then conjugated to L-isoleucine by the condensation domain of the NRPS module. Activity of the Dieckmann cyclase domain (RED) of pvhA results in release of an acyclic tetramate. The cytochrome P450 monooxygenase pvhE then catalyzes the oxidation of the C21 methyl group to a to carboxylate group. The methyltransferase pvhD then further methylates the pvhE product. The Diels-Alderase pvhB is able to catalyze Diels-Alder cycloaddition using both pvhE and pvhD products as substrates to form the decalin ring, yielding varicidin B and A, respectively. In Talaromyces variabilis (Penicillium variabile), this protein is Cytochrome P450 monooxygenase pvhE.